Consider the following 39-residue polypeptide: Photosystem II reaction center protein L (39 aa).

Residues 18–38 (SLYLGLLFVFVTGVLMSSYFF) traverse the membrane as a helical segment.

Belongs to the PsbL family. In terms of assembly, PSII is composed of 1 copy each of membrane proteins PsbA, PsbB, PsbC, PsbD, PsbE, PsbF, PsbH, PsbI, PsbJ, PsbK, PsbL, PsbM, PsbT, PsbX, PsbY, PsbZ, Psb30/Ycf12, peripheral proteins PsbO, CyanoQ (PsbQ), PsbU, PsbV and a large number of cofactors. It forms dimeric complexes.

It is found in the cellular thylakoid membrane. In terms of biological role, one of the components of the core complex of photosystem II (PSII). PSII is a light-driven water:plastoquinone oxidoreductase that uses light energy to abstract electrons from H(2)O, generating O(2) and a proton gradient subsequently used for ATP formation. It consists of a core antenna complex that captures photons, and an electron transfer chain that converts photonic excitation into a charge separation. This subunit is found at the monomer-monomer interface and is required for correct PSII assembly and/or dimerization. In Parasynechococcus marenigrum (strain WH8102), this protein is Photosystem II reaction center protein L.